We begin with the raw amino-acid sequence, 1275 residues long: Surfactin synthase subunit 3 (1275 aa).

Residues 968–1043 (GPRNEMEETI…GISAYLKNGG (76 aa)) enclose the Carrier domain. Ser1003 is modified (O-(pantetheine 4'-phosphoryl)serine). Positions 1059–1271 (QIIFAFPPVL…ILLEFLNTQT (213 aa)) are thioesterase. Residues Ser1120, Asp1147, and His1247 contribute to the active site.

The protein belongs to the ATP-dependent AMP-binding enzyme family. The cofactor is pantetheine 4'-phosphate.

It functions in the pathway antibiotic biosynthesis; surfactin biosynthesis. In terms of biological role, probably activates a leucine. This is Surfactin synthase subunit 3 (srfAC) from Bacillus subtilis (strain 168).